We begin with the raw amino-acid sequence, 483 residues long: Protein DETOXIFICATION 6 (483 aa).

The next 12 helical transmembrane spans lie at 38-58 (ALPM…SVMV), 69-89 (GVAL…FGLA), 113-133 (FSAI…WFYM), 146-166 (ISKV…AQAV), 187-207 (AITT…AFGL), 211-231 (GAAL…ALYV), 263-283 (AAMT…SGLL), 292-312 (VLSI…GIGA), 334-354 (VFAG…LLFI), 376-396 (LSPL…LGGV), 405-425 (IGAW…GLFL), and 436-456 (LWIG…IVTA).

It belongs to the multi antimicrobial extrusion (MATE) (TC 2.A.66.1) family.

Its subcellular location is the membrane. This Arabidopsis thaliana (Mouse-ear cress) protein is Protein DETOXIFICATION 6.